The chain runs to 415 residues: Histidine--tRNA ligase (415 aa).

Belongs to the class-II aminoacyl-tRNA synthetase family. In terms of assembly, homodimer.

Its subcellular location is the cytoplasm. It catalyses the reaction tRNA(His) + L-histidine + ATP = L-histidyl-tRNA(His) + AMP + diphosphate + H(+). The protein is Histidine--tRNA ligase of Clostridium botulinum (strain Okra / Type B1).